A 62-amino-acid chain; its full sequence is Photosystem II reaction center protein Z (62 aa).

2 consecutive transmembrane segments (helical) span residues Leu8–Ala28 and Tyr41–Val61.

The protein belongs to the PsbZ family. As to quaternary structure, PSII is composed of 1 copy each of membrane proteins PsbA, PsbB, PsbC, PsbD, PsbE, PsbF, PsbH, PsbI, PsbJ, PsbK, PsbL, PsbM, PsbT, PsbX, PsbY, PsbZ, Psb30/Ycf12, at least 3 peripheral proteins of the oxygen-evolving complex and a large number of cofactors. It forms dimeric complexes.

It localises to the plastid. The protein resides in the chloroplast thylakoid membrane. Its function is as follows. May control the interaction of photosystem II (PSII) cores with the light-harvesting antenna, regulates electron flow through the 2 photosystem reaction centers. PSII is a light-driven water plastoquinone oxidoreductase, using light energy to abstract electrons from H(2)O, generating a proton gradient subsequently used for ATP formation. This is Photosystem II reaction center protein Z from Pyropia yezoensis (Susabi-nori).